We begin with the raw amino-acid sequence, 336 residues long: GTPase Obg (336 aa).

An Obg domain is found at 1 to 159 (MKFLDETKVY…KTIWLRLKLI (159 aa)). One can recognise an OBG-type G domain in the interval 160-327 (ADAGLVGLPN…TLRALRSVID (168 aa)). GTP contacts are provided by residues 166–173 (GLPNAGKS), 191–195 (FTTLH), 212–215 (DIPG), 279–282 (SQID), and 308–310 (SAV). 2 residues coordinate Mg(2+): Ser173 and Thr193.

This sequence belongs to the TRAFAC class OBG-HflX-like GTPase superfamily. OBG GTPase family. In terms of assembly, monomer. The cofactor is Mg(2+).

The protein resides in the cytoplasm. In terms of biological role, an essential GTPase which binds GTP, GDP and possibly (p)ppGpp with moderate affinity, with high nucleotide exchange rates and a fairly low GTP hydrolysis rate. Plays a role in control of the cell cycle, stress response, ribosome biogenesis and in those bacteria that undergo differentiation, in morphogenesis control. The protein is GTPase Obg of Sinorhizobium medicae (strain WSM419) (Ensifer medicae).